The chain runs to 856 residues: DNA mismatch repair protein MutS (856 aa).

615–622 serves as a coordination point for ATP; it reads GPNMGGKS. Polar residues predominate over residues 798–807; it reads ETTGHQQAIK. The segment at 798-817 is disordered; the sequence is ETTGHQQAIKNPSKAPREEQ.

It belongs to the DNA mismatch repair MutS family.

Functionally, this protein is involved in the repair of mismatches in DNA. It is possible that it carries out the mismatch recognition step. This protein has a weak ATPase activity. This Photobacterium profundum (strain SS9) protein is DNA mismatch repair protein MutS.